The chain runs to 213 residues: Uracil phosphoribosyltransferase (213 aa).

Residues R78, R103, and 130–138 each bind 5-phospho-alpha-D-ribose 1-diphosphate; that span reads DPMLATGGS. Uracil contacts are provided by residues I193 and 198–200; that span reads GDA. D199 provides a ligand contact to 5-phospho-alpha-D-ribose 1-diphosphate.

This sequence belongs to the UPRTase family. The cofactor is Mg(2+).

It carries out the reaction UMP + diphosphate = 5-phospho-alpha-D-ribose 1-diphosphate + uracil. It participates in pyrimidine metabolism; UMP biosynthesis via salvage pathway; UMP from uracil: step 1/1. Its activity is regulated as follows. Allosterically activated by GTP. Catalyzes the conversion of uracil and 5-phospho-alpha-D-ribose 1-diphosphate (PRPP) to UMP and diphosphate. This is Uracil phosphoribosyltransferase from Bordetella bronchiseptica (strain ATCC BAA-588 / NCTC 13252 / RB50) (Alcaligenes bronchisepticus).